The sequence spans 217 residues: Uridylate kinase (217 aa).

Position 6–10 (6–10 (KLSGR)) interacts with ATP. A UMP-binding site is contributed by G38. The ATP site is built by G39 and R43. UMP-binding positions include D60 and 107 to 113 (FQPGQST). The ATP site is built by N134, Y139, and D142.

Belongs to the UMP kinase family. Homohexamer.

Its subcellular location is the cytoplasm. The catalysed reaction is UMP + ATP = UDP + ADP. The protein operates within pyrimidine metabolism; CTP biosynthesis via de novo pathway; UDP from UMP (UMPK route): step 1/1. Its activity is regulated as follows. Inhibited by UTP. Functionally, catalyzes the reversible phosphorylation of UMP to UDP. This Pyrobaculum neutrophilum (strain DSM 2338 / JCM 9278 / NBRC 100436 / V24Sta) (Thermoproteus neutrophilus) protein is Uridylate kinase.